We begin with the raw amino-acid sequence, 797 residues long: Hid-1 family protein P27G11.12 (797 aa).

It belongs to the hid-1 family.

The protein localises to the cytoplasm. The protein resides in the nucleus. This chain is Hid-1 family protein P27G11.12, found in Schizosaccharomyces pombe (strain 972 / ATCC 24843) (Fission yeast).